Here is a 439-residue protein sequence, read N- to C-terminus: Xylose isomerase (439 aa).

Residues H101 and D104 contribute to the active site. Residues E232, E268, H271, D296, D307, D309, and D339 each coordinate Mg(2+).

It belongs to the xylose isomerase family. In terms of assembly, homotetramer. Mg(2+) serves as cofactor.

Its subcellular location is the cytoplasm. It carries out the reaction alpha-D-xylose = alpha-D-xylulofuranose. The polypeptide is Xylose isomerase (Haemophilus influenzae (strain PittEE)).